The following is a 322-amino-acid chain: DNA repair and recombination protein RadA (322 aa).

105-112 is a binding site for ATP; it reads GMFGSGKT.

Belongs to the eukaryotic RecA-like protein family.

Its function is as follows. Involved in DNA repair and in homologous recombination. Binds and assemble on single-stranded DNA to form a nucleoprotein filament. Hydrolyzes ATP in a ssDNA-dependent manner and promotes DNA strand exchange between homologous DNA molecules. The sequence is that of DNA repair and recombination protein RadA from Methanococcus maripaludis (strain DSM 14266 / JCM 13030 / NBRC 101832 / S2 / LL).